The primary structure comprises 528 residues: Glutamyl-tRNA(Gln) amidotransferase subunit B, mitochondrial (528 aa).

Residues 1-21 constitute a mitochondrion transit peptide; it reads MSWRLSFRTNLLIYNVRRRNY.

Belongs to the GatB/GatE family. GatB subfamily. As to quaternary structure, subunit of the heterotrimeric GatCAB amidotransferase (AdT) complex, composed of A, B and C subunits.

Its subcellular location is the mitochondrion. It catalyses the reaction L-glutamyl-tRNA(Gln) + L-glutamine + ATP + H2O = L-glutaminyl-tRNA(Gln) + L-glutamate + ADP + phosphate + H(+). In terms of biological role, allows the formation of correctly charged Gln-tRNA(Gln) through the transamidation of misacylated Glu-tRNA(Gln) in the mitochondria. The reaction takes place in the presence of glutamine and ATP through an activated gamma-phospho-Glu-tRNA(Gln). The chain is Glutamyl-tRNA(Gln) amidotransferase subunit B, mitochondrial from Aedes aegypti (Yellowfever mosquito).